The primary structure comprises 515 residues: Putative BTB/POZ domain-containing protein At3g49970 (515 aa).

Residues 1–63 form the BTB domain; that stretch reads MLEKLSFLLH…CYDISFEINT (63 aa). One can recognise an NPH3 domain in the interval 149–409; that stretch reads DWWADDLAVL…NSDSPAPATA (261 aa). Tyr-350 carries the phosphotyrosine modification. A disordered region spans residues 395 to 417; that stretch reads QENLSNSDSPAPATAEKTLSPPE. The stretch at 418–452 forms a coiled coil; the sequence is LSSYKNELSKLNRENQYLKLELLKVKMKFKELEKE. The tract at residues 494 to 515 is disordered; it reads INPFGLKQGQTKQPKSRRHSIS.

It belongs to the NPH3 family.

Its pathway is protein modification; protein ubiquitination. May act as a substrate-specific adapter of an E3 ubiquitin-protein ligase complex (CUL3-RBX1-BTB) which mediates the ubiquitination and subsequent proteasomal degradation of target proteins. The chain is Putative BTB/POZ domain-containing protein At3g49970 from Arabidopsis thaliana (Mouse-ear cress).